The following is an 832-amino-acid chain: MPLSYQHFRKLLLLDNEAGPLEEELPRLADEDLNRRVAEDLNLGNLNVSIPWTHKVGNFTGLYSSSVPVFNPHWKTPSFPNIHLHQDIIKKCEQFVGPLTVNEKRRLKLIMPARFYPNFTKYLPLDKGIKPYYPEHLVNHYFHTRHYLHTLWKAGILYKRVSTHSASFCGSPYSWEQELQHGAESFHQQSSGILSRPSVGSSLQSKHQQSRLGLQSQQGHLARRQQGRSWSIRTRVHPTARRPSGVEPSGSGHNANLASKSASCLYQSTVRTAAYPAVSTSENHSSSGHAVELHNLPPNSARSQSERPVSPCWWLQFRNSKPCSDYCLSHIVNLLEDWGPCAEHGEHHIRIPRTPARVTGGVFLVDKNPHNTAESRLVVDFSQFSRGNYRVSWPKFAVPNLQSLTNLLSSNLCWLSLDVSAAFYHLPLHPAAMPHLLVGSSGLSRYVARLSSNSRIINHQHGTLQNLHDSCSRNLYVSLLLLYKTFGWKLHLYSHPIILGFRKIPMGVGLSPFLLAQFTSAICSVVRRAFPHCLAFSYMDDVVLGAKSVQHLESLFTAVTNFLLSLGIHLNPNKTKRWGYSLNFMGYVIGSWGSLPQDHIRHKIKECFRKLPVHRPIDWKVCQRIVGLLGFAAPFTQCGYPALMPLYACIQSKQAFTFSPTYKAFLCKQYLNLYPVARQRPGLCQVFADATPTGWGLVMGHQRMRGTFSAPLPIHTAELLAACFARSRSGANILGTDNSVVLSRKYTSFPWLLGCAANWILRGTSFVYVPSALNPADDPSRGRLGPCRPLLHLPFRPTTGRTSLYADSPSVPSHLPDRVHFASPLHVAWRPP.

A terminal protein domain (TP) region spans residues 1–177; that stretch reads MPLSYQHFRK…FCGSPYSWEQ (177 aa). Positions 178-335 are spacer; sequence ELQHGAESFH…YCLSHIVNLL (158 aa). The span at 186–206 shows a compositional bias: polar residues; the sequence is FHQQSSGILSRPSVGSSLQSK. Disordered stretches follow at residues 186–255 and 280–305; these read FHQQ…GHNA and TSEN…RSQS. Residues 210-220 show a composition bias toward low complexity; sequence SRLGLQSQQGH. Residues 336 to 679 form a polymerase/reverse transcriptase domain (RT) region; it reads EDWGPCAEHG…YLNLYPVARQ (344 aa). The Reverse transcriptase domain occupies 346–589; sequence EHHIRIPRTP…YSLNFMGYVI (244 aa). Aspartate 418, aspartate 540, and aspartate 541 together coordinate Mg(2+).

The protein belongs to the hepadnaviridae P protein family.

It catalyses the reaction DNA(n) + a 2'-deoxyribonucleoside 5'-triphosphate = DNA(n+1) + diphosphate. It carries out the reaction Endonucleolytic cleavage to 5'-phosphomonoester.. With respect to regulation, activated by host HSP70 and HSP40 in vitro to be able to bind the epsilon loop of the pgRNA. Because deletion of the RNase H region renders the protein partly chaperone-independent, the chaperones may be needed indirectly to relieve occlusion of the RNA-binding site by this domain. Inhibited by several reverse-transcriptase inhibitors: Lamivudine, Adefovir and Entecavir. Its function is as follows. Multifunctional enzyme that converts the viral RNA genome into dsDNA in viral cytoplasmic capsids. This enzyme displays a DNA polymerase activity that can copy either DNA or RNA templates, and a ribonuclease H (RNase H) activity that cleaves the RNA strand of RNA-DNA heteroduplexes in a partially processive 3'- to 5'-endonucleasic mode. Neo-synthesized pregenomic RNA (pgRNA) are encapsidated together with the P protein, and reverse-transcribed inside the nucleocapsid. Initiation of reverse-transcription occurs first by binding the epsilon loop on the pgRNA genome, and is initiated by protein priming, thereby the 5'-end of (-)DNA is covalently linked to P protein. Partial (+)DNA is synthesized from the (-)DNA template and generates the relaxed circular DNA (RC-DNA) genome. After budding and infection, the RC-DNA migrates in the nucleus, and is converted into a plasmid-like covalently closed circular DNA (cccDNA). The activity of P protein does not seem to be necessary for cccDNA generation, and is presumably released from (+)DNA by host nuclear DNA repair machinery. This is Protein P from Hepatitis B virus genotype D subtype ayw (isolate Australia/AustKW/1991) (HBV-D).